The primary structure comprises 148 residues: Large ribosomal subunit protein bL9 (148 aa).

The protein belongs to the bacterial ribosomal protein bL9 family.

In terms of biological role, binds to the 23S rRNA. This is Large ribosomal subunit protein bL9 from Azotobacter vinelandii (strain DJ / ATCC BAA-1303).